The primary structure comprises 100 residues: Small ribosomal subunit protein uS14c (100 aa).

This sequence belongs to the universal ribosomal protein uS14 family. Part of the 30S ribosomal subunit.

Its subcellular location is the plastid. It is found in the chloroplast. In terms of biological role, binds 16S rRNA, required for the assembly of 30S particles. This chain is Small ribosomal subunit protein uS14c, found in Cycas taitungensis (Prince sago).